A 337-amino-acid chain; its full sequence is Zinc finger protein Gfi-1b (337 aa).

Positions 1-20 (MPRSFLVKSKKAHTYHQHRF) are mediates repression of transcription. The segment at 1 to 20 (MPRSFLVKSKKAHTYHQHRF) is SNAG domain. C2H2-type zinc fingers lie at residues 170–193 (YHCV…RRSH), 199–221 (FACE…TNIH), 227–249 (FECK…LLIH), 255–277 (YPCQ…TYIH), 283–305 (HKCQ…SRKH), and 311–334 (FSCE…ETQH).

As to expression, expressed in erythroid cells of primitive and definitive lineage and bone marrow cells.

The protein resides in the nucleus. Functionally, essential transcriptional regulator necessary for development and differentiation of erythroid and megakaryocytic lineages. Alters histone methylation by recruiting histone methyltransferase to target genes promoters. Plays a role in heterochromatin formation. The polypeptide is Zinc finger protein Gfi-1b (GFI1B) (Gallus gallus (Chicken)).